A 34-amino-acid chain; its full sequence is Potassium channel toxin alpha-KTx 6.17 (34 aa).

4 disulfide bridges follow: C3-C24, C9-C29, C13-C31, and C19-C34.

The protein belongs to the short scorpion toxin superfamily. Potassium channel inhibitor family. Alpha-KTx 06 subfamily. Expressed by the venom gland.

Its subcellular location is the secreted. In terms of biological role, this toxin reversibly blocks Shaker B potassium-channels (expressed in insect Sf9 cells) with a Kd of 96.6 nM, and presents an even better affinity toward hKv1.3 (KCNA3), blocking it with a Kd of 17.7 nM. This is Potassium channel toxin alpha-KTx 6.17 from Opisthacanthus cayaporum (South American scorpion).